We begin with the raw amino-acid sequence, 149 residues long: UPF0178 protein NT01CX_0440 (149 aa).

This sequence belongs to the UPF0178 family.

This is UPF0178 protein NT01CX_0440 from Clostridium novyi (strain NT).